The sequence spans 87 residues: Ribonuclease P protein component 1 (87 aa).

Belongs to the eukaryotic/archaeal RNase P protein component 1 family. In terms of assembly, consists of a catalytic RNA component and at least 4-5 protein subunits.

The protein localises to the cytoplasm. The enzyme catalyses Endonucleolytic cleavage of RNA, removing 5'-extranucleotides from tRNA precursor.. Functionally, part of ribonuclease P, a protein complex that generates mature tRNA molecules by cleaving their 5'-ends. This Thermoplasma acidophilum (strain ATCC 25905 / DSM 1728 / JCM 9062 / NBRC 15155 / AMRC-C165) protein is Ribonuclease P protein component 1.